Consider the following 93-residue polypeptide: Probable endoribonuclease MazF1 (93 aa).

This sequence belongs to the PemK/MazF family. In terms of assembly, forms a complex with cognate antitoxin MazE1.

Toxic component of a type II toxin-antitoxin (TA) system, its cognate antitoxin is MazE1. Probably an endoribonuclease. This is Probable endoribonuclease MazF1 (mazF1) from Mycobacterium tuberculosis (strain ATCC 25618 / H37Rv).